The chain runs to 316 residues: GTP cyclohydrolase FolE2 1 (316 aa).

The protein belongs to the GTP cyclohydrolase IV family.

The enzyme catalyses GTP + H2O = 7,8-dihydroneopterin 3'-triphosphate + formate + H(+). It participates in cofactor biosynthesis; 7,8-dihydroneopterin triphosphate biosynthesis; 7,8-dihydroneopterin triphosphate from GTP: step 1/1. Converts GTP to 7,8-dihydroneopterin triphosphate. The sequence is that of GTP cyclohydrolase FolE2 1 from Burkholderia orbicola (strain AU 1054).